The chain runs to 188 residues: UPF0301 protein PsycPRwf_0144 (188 aa).

This sequence belongs to the UPF0301 (AlgH) family.

This chain is UPF0301 protein PsycPRwf_0144, found in Psychrobacter sp. (strain PRwf-1).